The sequence spans 189 residues: HGPRTase-like protein 2 (189 aa).

This sequence belongs to the purine/pyrimidine phosphoribosyltransferase family. Archaeal HPRT subfamily.

Its function is as follows. May catalyze a purine salvage reaction, the substrate is unknown. This Haloarcula marismortui (strain ATCC 43049 / DSM 3752 / JCM 8966 / VKM B-1809) (Halobacterium marismortui) protein is HGPRTase-like protein 2.